A 391-amino-acid polypeptide reads, in one-letter code: Serine protease 7 (391 aa).

An N-terminal signal peptide occupies residues 1 to 27 (MKSTRKVVGIFLATCLLPFTVLQNVAA). The propeptide at 28-136 (QGSCRNPNQK…KCGPHSFSNK (109 aa)) is activation peptide. A Clip domain is found at 30 to 84 (SCRNPNQKQGQCLSIYDCQSLLSVIQQSYVSPEDRTFLRNSQCLDGVGRQPYVCC). 3 cysteine pairs are disulfide-bonded: cysteine 31/cysteine 83, cysteine 41/cysteine 72, and cysteine 47/cysteine 84. A disordered region spans residues 91-121 (GSQEATSAAPPPTTTSSSSRGQDGQAGLGNL). 5 disulfide bridges follow: cysteine 128–cysteine 264, cysteine 167–cysteine 183, cysteine 211–cysteine 216, cysteine 310–cysteine 327, and cysteine 337–cysteine 366. Residues 137–390 (VYNGNDTAID…YMDWIVETIR (254 aa)) form the Peptidase S1 domain. Asparagine 141 carries N-linked (GlcNAc...) asparagine glycosylation. The active-site Charge relay system is the histidine 182. Ca(2+)-binding residues include glutamate 202, aspartate 204, lysine 207, and aspartate 210. Residue aspartate 244 is the Charge relay system of the active site. The active-site Charge relay system is the serine 341.

The protein belongs to the peptidase S1 family. CLIP subfamily. As to quaternary structure, interacts with Spn27A.

It is found in the secreted. In terms of biological role, serine protease that, by cleaving and activating prophenoloxidase (PPO1) after immune challenge, plays an essential role in the melanization immune response to septic wounding. May function in diverse Hayan-dependent PPO1-activating cascades that are negatively controlled by different serpin proteins; Spn27A in the hemolymph and Spn77BA in the trachea. Important for the innate immune response to fungi. Regulation of melanization and PPO1 activation appears to be largely independent of the Toll signaling pathway. This is Serine protease 7 from Drosophila melanogaster (Fruit fly).